Here is a 125-residue protein sequence, read N- to C-terminus: Small ribosomal subunit protein eS8 (125 aa).

The protein belongs to the eukaryotic ribosomal protein eS8 family. Part of the 30S ribosomal subunit.

In Methanocorpusculum labreanum (strain ATCC 43576 / DSM 4855 / Z), this protein is Small ribosomal subunit protein eS8.